The following is a 226-amino-acid chain: Leucyl/phenylalanyl-tRNA--protein transferase (226 aa).

This sequence belongs to the L/F-transferase family.

It localises to the cytoplasm. It carries out the reaction N-terminal L-lysyl-[protein] + L-leucyl-tRNA(Leu) = N-terminal L-leucyl-L-lysyl-[protein] + tRNA(Leu) + H(+). It catalyses the reaction N-terminal L-arginyl-[protein] + L-leucyl-tRNA(Leu) = N-terminal L-leucyl-L-arginyl-[protein] + tRNA(Leu) + H(+). The catalysed reaction is L-phenylalanyl-tRNA(Phe) + an N-terminal L-alpha-aminoacyl-[protein] = an N-terminal L-phenylalanyl-L-alpha-aminoacyl-[protein] + tRNA(Phe). Functionally, functions in the N-end rule pathway of protein degradation where it conjugates Leu, Phe and, less efficiently, Met from aminoacyl-tRNAs to the N-termini of proteins containing an N-terminal arginine or lysine. This Pseudomonas putida (strain ATCC 47054 / DSM 6125 / CFBP 8728 / NCIMB 11950 / KT2440) protein is Leucyl/phenylalanyl-tRNA--protein transferase.